The chain runs to 136 residues: Small integral membrane protein 23 (136 aa).

Topologically, residues 1 to 31 (MTIQKTGCRGREAAEVVEQRRRSHHCDDRKQ) are cytoplasmic. A helical; Signal-anchor for type II membrane protein membrane pass occupies residues 32–52 (TLLALLILVLYLGMGISGSSW). Residues 53–136 (EVSGQTKDCN…DLRPEDPCFT (84 aa)) lie on the Extracellular side of the membrane. Positions 92 to 124 (LKINLHGFLEKLEKEVRELEQLVRDLEFWLDAL) form a coiled coil.

The protein resides in the membrane. The sequence is that of Small integral membrane protein 23 (Smim23) from Mus musculus (Mouse).